We begin with the raw amino-acid sequence, 313 residues long: Epoxide hydrolase 1 (313 aa).

One can recognise an AB hydrolase-1 domain in the interval 25–299 (PAVLFLHGFP…AAHFINQEKA (275 aa)). The active-site Nucleophile is D100. Y149 is a binding site for an epoxide. Catalysis depends on Y227, which acts as the Proton donor. Residue H292 is the Proton acceptor of the active site.

Belongs to the AB hydrolase superfamily. Epoxide hydrolase family. Homodimer. In terms of tissue distribution, highly expressed in fruits 15 days after anthesis (15-DAA).

It carries out the reaction an epoxide + H2O = an ethanediol. The catalysed reaction is (24S)-24,25-epoxycucurbitadienol + H2O = (24R)-24,25-dihydroxycucurbitadienol. Its pathway is secondary metabolite biosynthesis; terpenoid biosynthesis. Functionally, epoxide hydrolase involved in the biosynthesis of cucurbitacin and mogroside tetracyclic triterpene natural products (e.g. siamenoside I and mogrosides IV, V and VI). Cucurbitacins have cytotoxic properties and exhibit deterrent taste as a defense barrier against herbivores. Mogrosides are nonsugar highly oxygenated compounds used as high-intensity zero-calorie sweeteners; they also possess pharmacological properties such as regulating immunity, lowering blood sugar and lipid levels, protecting the liver, and acting as antioxidants and antitumor agents. Catalyzes the hydrolysis of aromatic epoxide-containing substrates, such as the conversion of 24,25-epoxycucurbitadienol to 24,25-dihydroxycucurbitadienol. The polypeptide is Epoxide hydrolase 1 (Siraitia grosvenorii (Monk's fruit)).